A 126-amino-acid chain; its full sequence is Protein ApaG (126 aa).

The ApaG domain occupies 2-126 (SALDTSIRVE…FRLATPGLLH (125 aa)).

This is Protein ApaG from Shewanella sp. (strain W3-18-1).